The primary structure comprises 145 residues: Large ribosomal subunit protein uL13 (145 aa).

It belongs to the universal ribosomal protein uL13 family. As to quaternary structure, part of the 50S ribosomal subunit.

This protein is one of the early assembly proteins of the 50S ribosomal subunit, although it is not seen to bind rRNA by itself. It is important during the early stages of 50S assembly. This Brevibacillus brevis (strain 47 / JCM 6285 / NBRC 100599) protein is Large ribosomal subunit protein uL13.